A 439-amino-acid polypeptide reads, in one-letter code: 23S rRNA (uracil(1939)-C(5))-methyltransferase RlmD (439 aa).

A TRAM domain is found at 5–63; that stretch reads RKLEHKTYKLNIESFSHEGRGIAHFEDKIIFVSDALPGELVIANRTFSCAKFEEADAKE. Positions 76, 82, 85, and 164 each coordinate [4Fe-4S] cluster. Positions 271, 300, 305, 321, 348, and 370 each coordinate S-adenosyl-L-methionine. Residue Cys396 is the Nucleophile of the active site.

Belongs to the class I-like SAM-binding methyltransferase superfamily. RNA M5U methyltransferase family. RlmD subfamily.

It catalyses the reaction uridine(1939) in 23S rRNA + S-adenosyl-L-methionine = 5-methyluridine(1939) in 23S rRNA + S-adenosyl-L-homocysteine + H(+). In terms of biological role, catalyzes the formation of 5-methyl-uridine at position 1939 (m5U1939) in 23S rRNA. This Vesicomyosocius okutanii subsp. Calyptogena okutanii (strain HA) protein is 23S rRNA (uracil(1939)-C(5))-methyltransferase RlmD.